The following is a 404-amino-acid chain: Glucose-1-phosphate adenylyltransferase (404 aa).

Residues Tyr-99, Gly-164, 179–180 (EK), and Ser-197 each bind alpha-D-glucose 1-phosphate.

The protein belongs to the bacterial/plant glucose-1-phosphate adenylyltransferase family.

The enzyme catalyses alpha-D-glucose 1-phosphate + ATP + H(+) = ADP-alpha-D-glucose + diphosphate. Its pathway is capsule biogenesis; capsule polysaccharide biosynthesis. The protein operates within glycan biosynthesis; glycogen biosynthesis. Involved in the biosynthesis of ADP-glucose, a building block, required in the biosynthesis of maltose-1-phosphate (M1P) and in the elongation reactions to produce linear alpha-1,4-glucans. Catalyzes the reaction between ATP and alpha-D-glucose 1-phosphate (G1P) to produce pyrophosphate and ADP-Glc. This Mycobacterium ulcerans (strain Agy99) protein is Glucose-1-phosphate adenylyltransferase.